The chain runs to 313 residues: 4-hydroxy-3-methylbut-2-enyl diphosphate reductase (313 aa).

[4Fe-4S] cluster is bound at residue Cys-14. Residues His-43 and His-76 each coordinate (2E)-4-hydroxy-3-methylbut-2-enyl diphosphate. His-43 and His-76 together coordinate dimethylallyl diphosphate. 2 residues coordinate isopentenyl diphosphate: His-43 and His-76. Cys-98 is a binding site for [4Fe-4S] cluster. A (2E)-4-hydroxy-3-methylbut-2-enyl diphosphate-binding site is contributed by His-126. His-126 is a dimethylallyl diphosphate binding site. Isopentenyl diphosphate is bound at residue His-126. Glu-128 acts as the Proton donor in catalysis. Residue Thr-166 participates in (2E)-4-hydroxy-3-methylbut-2-enyl diphosphate binding. [4Fe-4S] cluster is bound at residue Cys-196. Residues Ser-224, Ser-225, Asn-226, and Ser-269 each contribute to the (2E)-4-hydroxy-3-methylbut-2-enyl diphosphate site. 4 residues coordinate dimethylallyl diphosphate: Ser-224, Ser-225, Asn-226, and Ser-269. Positions 224, 225, 226, and 269 each coordinate isopentenyl diphosphate.

This sequence belongs to the IspH family. It depends on [4Fe-4S] cluster as a cofactor.

The catalysed reaction is isopentenyl diphosphate + 2 oxidized [2Fe-2S]-[ferredoxin] + H2O = (2E)-4-hydroxy-3-methylbut-2-enyl diphosphate + 2 reduced [2Fe-2S]-[ferredoxin] + 2 H(+). It catalyses the reaction dimethylallyl diphosphate + 2 oxidized [2Fe-2S]-[ferredoxin] + H2O = (2E)-4-hydroxy-3-methylbut-2-enyl diphosphate + 2 reduced [2Fe-2S]-[ferredoxin] + 2 H(+). It participates in isoprenoid biosynthesis; dimethylallyl diphosphate biosynthesis; dimethylallyl diphosphate from (2E)-4-hydroxy-3-methylbutenyl diphosphate: step 1/1. Its pathway is isoprenoid biosynthesis; isopentenyl diphosphate biosynthesis via DXP pathway; isopentenyl diphosphate from 1-deoxy-D-xylulose 5-phosphate: step 6/6. In terms of biological role, catalyzes the conversion of 1-hydroxy-2-methyl-2-(E)-butenyl 4-diphosphate (HMBPP) into a mixture of isopentenyl diphosphate (IPP) and dimethylallyl diphosphate (DMAPP). Acts in the terminal step of the DOXP/MEP pathway for isoprenoid precursor biosynthesis. This is 4-hydroxy-3-methylbut-2-enyl diphosphate reductase from Tropheryma whipplei (strain TW08/27) (Whipple's bacillus).